A 287-amino-acid chain; its full sequence is Pirin-1 (287 aa).

T2 carries the post-translational modification N-acetylthreonine.

It belongs to the pirin family. In terms of assembly, interacts with the G protein alpha-1 subunit GPA1. Interacts with NFYB6 and NFYB9.

The protein localises to the nucleus. In terms of biological role, involved in abscisic acid signal transduction. Plays a role in seed germination and early seedling development. Involved in the blue light (BL) signaling. The sequence is that of Pirin-1 (PRN1) from Arabidopsis thaliana (Mouse-ear cress).